A 411-amino-acid chain; its full sequence is Lissencephaly-1 homolog (411 aa).

Residues 9–41 form the LisH domain; that stretch reads QREELNQAIADYLGSNGYADSLETFRKEADLST. Residues 56-83 adopt a coiled-coil conformation; sequence TSVIRLQKKVMELEAKLTEAEKEVIEGA. 7 WD repeats span residues 106 to 147, 148 to 187, 191 to 230, 233 to 272, 275 to 334, 337 to 376, and 379 to 411; these read GHRA…RSLK, GHTDSVQDVAFDAQGKLLASCSADLSIKLWDFQQSYECIK, GHDHNVSSVAFVPAGDYVLSASRDRTIKMWEVATGYCVKT, GHREWVRMVRVHIEGSIFATCSNDQTIRVWLTNSKDCKVE, DHEH…CLLT, GHDNWVRGLAFHPGGKYLVSASDDKTIRVWDLRNKRCMKT, and AHQHFCTSIDFHKAHPYVISGSVDQTVKVWECR.

It belongs to the WD repeat LIS1/nudF family.

The protein localises to the cytoplasm. Its subcellular location is the cytoskeleton. It is found in the microtubule organizing center. It localises to the centrosome. In terms of biological role, positively regulates the activity of the minus-end directed microtubule motor protein dynein. May enhance dynein-mediated microtubule sliding by targeting dynein to the microtubule plus end. Required for several dynein- and microtubule-dependent processes. This is Lissencephaly-1 homolog from Drosophila yakuba (Fruit fly).